Here is a 440-residue protein sequence, read N- to C-terminus: C-terminal-binding protein 1 (440 aa).

Residues 1–70 (MGSSHLLNKG…EIHEKVLNEA (70 aa)) form an interaction with GLIS2 1 region. Residues Ser-100, 180-185 (IGLGRV), Asp-204, 237-243 (CGLNEHN), 264-266 (TAR), and Asp-290 contribute to the NAD(+) site. Arg-266 is an active-site residue. Residues 288–360 (ALDVHESEPF…VNKDHLTAAT (73 aa)) are interaction with GLIS2 2. Glu-295 is a catalytic residue. Phosphoserine is present on Ser-300. Residue His-315 is the Proton donor of the active site. 315-318 (HAAW) contributes to the NAD(+) binding site. The disordered stretch occupies residues 408-440 (SHGLPPVAHPPHAPSPGQTVKPEADRDHASDQL). Phosphoserine; by HIPK2 is present on Ser-422. A Glycyl lysine isopeptide (Lys-Gly) (interchain with G-Cter in SUMO) cross-link involves residue Lys-428. Positions 429 to 440 (PEADRDHASDQL) are enriched in basic and acidic residues.

This sequence belongs to the D-isomer specific 2-hydroxyacid dehydrogenase family. In terms of assembly, homo- or heterodimer. Heterodimer with CTBP2. Interacts with PRDM16; the interaction represses white adipose tissue (WAT)-specific genes expression. Interacts with GLIS2, FOXP2, HDAC4, HDAC5, HDAC9 and ZNF217. Interacts with ELK3 (via its PXDLS motif). Interacts with RBBP8 (via its PXDLS motif); the interaction is disrupted by binding to adenovirus E1A. Interacts with FOXP1, HIPK2, PNN, NRIP1, MECOM, ZFHX1B and WIZ. Interacts with ZNF366 (via PXDLS motif). Interaction with SATB1 (non-acetylated form); the interaction stabilizes its attachment to DNA and promotes transcription repression. Interacts with BCL6; the interaction is required for BCL6 transcriptional autoinhibition and inhibition of some BCL6 target genes. Interacts with IKZF4. Interacts with MCRIP1 (unphosphorylated form, via the PXDLS motif); competitively inhibiting CTBP-ZEB1 interaction. Interacts with Bassoon/BSN; this interaction targets and anchors CTBP1 to presynapses. Interacts with SIMC1. (Microbial infection) Interacts with Epstein-Barr virus EBNA3. Interacts with Epstein-Barr virus EBNA6; this interaction leads to gene repression, but also seems to interfere with the repressive function of CtBP pre-bound to DNA, leading to EBNA6 mediated up-regulation of many cellular genes. As to quaternary structure, (Microbial infection) Interacts with adenovirus E1A protein (via its C-terminus); the interaction disrupts the interaction of CTBP1 with RBBP8. In terms of assembly, (Microbial infection) Interacts with human adenovirus 5 E1A protein; this interaction seems to potentiate viral replication. Requires NAD(+) as cofactor. Post-translationally, the level of phosphorylation appears to be regulated during the cell cycle. Phosphorylation by HIPK2 on Ser-422 induces proteasomal degradation. In terms of processing, ADP-ribosylated; when cells are exposed to brefeldin A. Sumoylation on Lys-428 is promoted by the E3 SUMO-protein ligase CBX4. In terms of tissue distribution, expressed in germinal center B-cells.

It is found in the cytoplasm. It localises to the nucleus. Corepressor targeting diverse transcription regulators such as GLIS2 or BCL6. Has dehydrogenase activity. Involved in controlling the equilibrium between tubular and stacked structures in the Golgi complex. Functions in brown adipose tissue (BAT) differentiation. This chain is C-terminal-binding protein 1 (CTBP1), found in Homo sapiens (Human).